The chain runs to 219 residues: Small ribosomal subunit protein uS3c (219 aa).

In terms of domain architecture, KH type-2 spans 43 to 118; sequence IKNYVQKNMK…KLNIAITRIA (76 aa).

It belongs to the universal ribosomal protein uS3 family. In terms of assembly, part of the 30S ribosomal subunit.

It is found in the plastid. It localises to the chloroplast. The protein is Small ribosomal subunit protein uS3c (rps3) of Panax ginseng (Korean ginseng).